Consider the following 210-residue polypeptide: Protein-L-isoaspartate O-methyltransferase (210 aa).

Residue Ser59 is part of the active site.

The protein belongs to the methyltransferase superfamily. L-isoaspartyl/D-aspartyl protein methyltransferase family.

It localises to the cytoplasm. It carries out the reaction [protein]-L-isoaspartate + S-adenosyl-L-methionine = [protein]-L-isoaspartate alpha-methyl ester + S-adenosyl-L-homocysteine. Functionally, catalyzes the methyl esterification of L-isoaspartyl residues in peptides and proteins that result from spontaneous decomposition of normal L-aspartyl and L-asparaginyl residues. It plays a role in the repair and/or degradation of damaged proteins. This chain is Protein-L-isoaspartate O-methyltransferase, found in Nitratidesulfovibrio vulgaris (strain ATCC 29579 / DSM 644 / CCUG 34227 / NCIMB 8303 / VKM B-1760 / Hildenborough) (Desulfovibrio vulgaris).